Here is a 140-residue protein sequence, read N- to C-terminus: Large ribosomal subunit protein uL13 (140 aa).

This sequence belongs to the universal ribosomal protein uL13 family. Part of the 50S ribosomal subunit.

Its function is as follows. This protein is one of the early assembly proteins of the 50S ribosomal subunit, although it is not seen to bind rRNA by itself. It is important during the early stages of 50S assembly. The sequence is that of Large ribosomal subunit protein uL13 from Nautilia profundicola (strain ATCC BAA-1463 / DSM 18972 / AmH).